We begin with the raw amino-acid sequence, 1122 residues long: Maestro heat-like repeat-containing protein family member 7 (1122 aa).

Disordered regions lie at residues 1 to 144 (MALS…LSED) and 183 to 203 (SHTI…NTSL). A compositionally biased stretch (low complexity) spans 33-65 (TTPRPTPDLTLAPLPAHGVALAPALHPALSPDP). Polar residues-rich tracts occupy residues 75–95 (DISN…INTA), 120–136 (PVPS…SPEN), and 184–203 (HTIS…NTSL). Residues Asn200, Asn210, Asn255, Asn267, and Asn296 are each glycosylated (N-linked (GlcNAc...) asparagine). The interval 246-265 (WNTGSKGSVNVTSNSQPRSG) is disordered. The residue at position 356 (Ser356) is a Phosphoserine. The interval 363–385 (FRSPPEGTSEDAKANESEKRDHD) is disordered. Residues 372 to 385 (EDAKANESEKRDHD) show a composition bias toward basic and acidic residues. N-linked (GlcNAc...) asparagine glycans are attached at residues Asn541 and Asn546. Helical transmembrane passes span 548–568 (TLVT…LLLG) and 722–742 (LLPI…ALLM). HEAT repeat units lie at residues 913–950 (QELC…MEQV), 992–1029 (TKVQ…GQAK), 1035–1072 (SVYI…KLRM), and 1080–1117 (EQLT…FFLL).

The protein localises to the membrane. This Rattus norvegicus (Rat) protein is Maestro heat-like repeat-containing protein family member 7 (Mroh7).